The primary structure comprises 83 residues: SEDDGSASPESQEMSYTELPCPSICPLIYAPVCVEDSNQDFYLFVNECEVRKCGCEAGFVYTFVPREMCKATTSLCPMQTKSS.

Phosphoserine occurs at positions 8, 11, and 15. 4 disulfides stabilise this stretch: C21/C55, C25/C48, C33/C69, and C53/C76.

In terms of biological role, serine protease inhibitor. Inhibits porcine pancreatic elastase with a Ki of 58.3 nM, human neutrophil elastase with a Ki of 3.6 nM, cathepsin G with a Ki of 153.5 nM, chymotrypsin with a Ki of 26.7 nM and subtilisin with a Ki of 0.68 nM. Does not inhibit neutrophil protease 3 or pancreatic trypsin. In Schistocerca gregaria (Desert locust), this protein is Greglin.